We begin with the raw amino-acid sequence, 860 residues long: Leucine--tRNA ligase (860 aa).

The 'HIGH' region motif lies at 42-52 (PYPSGRLHMGH). A 'KMSKS' region motif is present at residues 619–623 (KMSKS). Lys-622 provides a ligand contact to ATP.

It belongs to the class-I aminoacyl-tRNA synthetase family.

The protein localises to the cytoplasm. The catalysed reaction is tRNA(Leu) + L-leucine + ATP = L-leucyl-tRNA(Leu) + AMP + diphosphate. This is Leucine--tRNA ligase from Klebsiella pneumoniae subsp. pneumoniae (strain ATCC 700721 / MGH 78578).